A 557-amino-acid chain; its full sequence is 2-succinyl-5-enolpyruvyl-6-hydroxy-3-cyclohexene-1-carboxylate synthase (557 aa).

Belongs to the TPP enzyme family. MenD subfamily. As to quaternary structure, homodimer. Mg(2+) is required as a cofactor. It depends on Mn(2+) as a cofactor. Requires thiamine diphosphate as cofactor.

The catalysed reaction is isochorismate + 2-oxoglutarate + H(+) = 5-enolpyruvoyl-6-hydroxy-2-succinyl-cyclohex-3-ene-1-carboxylate + CO2. It participates in quinol/quinone metabolism; 1,4-dihydroxy-2-naphthoate biosynthesis; 1,4-dihydroxy-2-naphthoate from chorismate: step 2/7. The protein operates within quinol/quinone metabolism; menaquinone biosynthesis. Its function is as follows. Catalyzes the thiamine diphosphate-dependent decarboxylation of 2-oxoglutarate and the subsequent addition of the resulting succinic semialdehyde-thiamine pyrophosphate anion to isochorismate to yield 2-succinyl-5-enolpyruvyl-6-hydroxy-3-cyclohexene-1-carboxylate (SEPHCHC). This chain is 2-succinyl-5-enolpyruvyl-6-hydroxy-3-cyclohexene-1-carboxylate synthase, found in Yersinia enterocolitica serotype O:8 / biotype 1B (strain NCTC 13174 / 8081).